The primary structure comprises 30 residues: Ornithine carbamoyltransferase, catabolic (30 aa).

The protein belongs to the aspartate/ornithine carbamoyltransferase superfamily. OTCase family.

Its subcellular location is the cytoplasm. The catalysed reaction is carbamoyl phosphate + L-ornithine = L-citrulline + phosphate + H(+). Its pathway is amino-acid degradation; L-arginine degradation via ADI pathway; carbamoyl phosphate from L-arginine: step 2/2. This Aeromonas caviae (Aeromonas punctata) protein is Ornithine carbamoyltransferase, catabolic (arcB).